The sequence spans 60 residues: Protein YmjC (60 aa).

Positions 40 to 60 are disordered; that stretch reads HKPYPTNKMQTTSGKKVIQDR.

In Escherichia coli (strain K12), this protein is Protein YmjC (ymjC).